The primary structure comprises 191 residues: MSEKKNKKERLADEIEQEELNILDETEETVEEEAAADTLTEEQAKILELENKLDEVENRYLRMQADFENVKKRHIADRDASQKYRSQSLAQDLLPALDSFEKALATTSDQEEVKQILKGMEMVYNQILVAFEKEGIEVIPAVGEQFDPNFHQAVMQDSDENAGSNEITAELQKGYKLKDRVIRPSMVKVNQ.

It belongs to the GrpE family. As to quaternary structure, homodimer.

The protein localises to the cytoplasm. Its function is as follows. Participates actively in the response to hyperosmotic and heat shock by preventing the aggregation of stress-denatured proteins, in association with DnaK and GrpE. It is the nucleotide exchange factor for DnaK and may function as a thermosensor. Unfolded proteins bind initially to DnaJ; upon interaction with the DnaJ-bound protein, DnaK hydrolyzes its bound ATP, resulting in the formation of a stable complex. GrpE releases ADP from DnaK; ATP binding to DnaK triggers the release of the substrate protein, thus completing the reaction cycle. Several rounds of ATP-dependent interactions between DnaJ, DnaK and GrpE are required for fully efficient folding. The chain is Protein GrpE from Listeria monocytogenes serotype 4b (strain CLIP80459).